The following is a 950-amino-acid chain: Protein translocase subunit SecA (950 aa).

ATP contacts are provided by residues Gln87, 105–109 (GEGKT), and Asp524. The interval 908-932 (GAAPVPAEARNPNDPSTWGKVGRNE) is disordered. Cys934, Cys936, Cys945, and His946 together coordinate Zn(2+).

This sequence belongs to the SecA family. As to quaternary structure, monomer and homodimer. Part of the essential Sec protein translocation apparatus which comprises SecA, SecYEG and auxiliary proteins SecDF-YajC and YidC. It depends on Zn(2+) as a cofactor.

It localises to the cell inner membrane. The protein localises to the cytoplasm. It carries out the reaction ATP + H2O + cellular proteinSide 1 = ADP + phosphate + cellular proteinSide 2.. Part of the Sec protein translocase complex. Interacts with the SecYEG preprotein conducting channel. Has a central role in coupling the hydrolysis of ATP to the transfer of proteins into and across the cell membrane, serving both as a receptor for the preprotein-SecB complex and as an ATP-driven molecular motor driving the stepwise translocation of polypeptide chains across the membrane. The sequence is that of Protein translocase subunit SecA from Bradyrhizobium sp. (strain BTAi1 / ATCC BAA-1182).